Here is a 287-residue protein sequence, read N- to C-terminus: Alpha-ketoglutarate-dependent 2,4-dichlorophenoxyacetate dioxygenase (287 aa).

A 3-hydroxytryptophan; by autocatalysis modification is found at Trp-113. 2 residues coordinate Fe cation: His-114 and Asp-116. The 2-oxoglutarate site is built by Thr-141 and Trp-248. His-263 lines the Fe cation pocket. Residues Arg-274 and Arg-278 each coordinate 2-oxoglutarate.

It belongs to the TfdA dioxygenase family. The cofactor is Fe(2+). Hydroxylated on Trp-113; inactivates the enzyme.

The catalysed reaction is (2,4-dichlorophenoxy)acetate + 2-oxoglutarate + O2 = 2,4-dichlorophenol + glyoxylate + succinate + CO2. It participates in xenobiotic degradation; (2,4-dichlorophenoxy)acetate degradation. Its activity is regulated as follows. Activated by ascorbate. Involved in degradation of the herbicide 2,4-dichlorophenoxyacetic acid (2,4-D). Is also able to degrade 2-methyl-4-chlorophenoxyacetic acid and 3-chlorobenzoic acid. This is Alpha-ketoglutarate-dependent 2,4-dichlorophenoxyacetate dioxygenase (tfdA) from Cupriavidus pinatubonensis (strain JMP 134 / LMG 1197) (Cupriavidus necator (strain JMP 134)).